The sequence spans 309 residues: Putative lipid kinase YtlR (309 aa).

The 134-residue stretch at 1–134 (MSHWFFIINP…FHLGSVNFLQ (134 aa)) folds into the DAGKc domain. ATP contacts are provided by residues 9-13 (NPTAG), T40, and 69-75 (GDGTMHE). Mg(2+)-binding residues include N229, E232, and T234. Residue E289 is the Proton acceptor of the active site.

This sequence belongs to the diacylglycerol/lipid kinase family. Mg(2+) is required as a cofactor.

Functionally, may catalyze the ATP-dependent phosphorylation of lipids other than diacylglycerol (DAG). In fact, is not able to exhibit diacylglycerol kinase activity in vitro. The sequence is that of Putative lipid kinase YtlR (ytlR) from Bacillus subtilis (strain 168).